We begin with the raw amino-acid sequence, 284 residues long: 4-diphosphocytidyl-2-C-methyl-D-erythritol kinase (284 aa).

Lysine 14 is an active-site residue. 98 to 108 (PMGGGLGGGSS) contacts ATP. Aspartate 140 is an active-site residue.

This sequence belongs to the GHMP kinase family. IspE subfamily.

It catalyses the reaction 4-CDP-2-C-methyl-D-erythritol + ATP = 4-CDP-2-C-methyl-D-erythritol 2-phosphate + ADP + H(+). It functions in the pathway isoprenoid biosynthesis; isopentenyl diphosphate biosynthesis via DXP pathway; isopentenyl diphosphate from 1-deoxy-D-xylulose 5-phosphate: step 3/6. Catalyzes the phosphorylation of the position 2 hydroxy group of 4-diphosphocytidyl-2C-methyl-D-erythritol. The sequence is that of 4-diphosphocytidyl-2-C-methyl-D-erythritol kinase from Shewanella sp. (strain W3-18-1).